The chain runs to 141 residues: Auxin-responsive protein SAUR64 (141 aa).

Belongs to the ARG7 family.

Its subcellular location is the cell membrane. In terms of biological role, may promote auxin-stimulated organ elongation, such as hypocotyls, stamen filaments and petals. In Arabidopsis thaliana (Mouse-ear cress), this protein is Auxin-responsive protein SAUR64.